We begin with the raw amino-acid sequence, 95 residues long: Large ribosomal subunit protein uL23 (95 aa).

This sequence belongs to the universal ribosomal protein uL23 family. As to quaternary structure, part of the 50S ribosomal subunit. Contacts protein L29, and trigger factor when it is bound to the ribosome.

Functionally, one of the early assembly proteins it binds 23S rRNA. One of the proteins that surrounds the polypeptide exit tunnel on the outside of the ribosome. Forms the main docking site for trigger factor binding to the ribosome. In Desulforamulus reducens (strain ATCC BAA-1160 / DSM 100696 / MI-1) (Desulfotomaculum reducens), this protein is Large ribosomal subunit protein uL23.